The sequence spans 162 residues: NADH-quinone oxidoreductase subunit I (162 aa).

4Fe-4S ferredoxin-type domains lie at 53–83 and 93–122; these read LRRY…IESE and TRYD…ETRV. [4Fe-4S] cluster is bound by residues Cys63, Cys66, Cys69, Cys73, Cys102, Cys105, Cys108, and Cys112.

Belongs to the complex I 23 kDa subunit family. As to quaternary structure, NDH-1 is composed of 14 different subunits. Subunits NuoA, H, J, K, L, M, N constitute the membrane sector of the complex. It depends on [4Fe-4S] cluster as a cofactor.

The protein resides in the cell inner membrane. It catalyses the reaction a quinone + NADH + 5 H(+)(in) = a quinol + NAD(+) + 4 H(+)(out). Its function is as follows. NDH-1 shuttles electrons from NADH, via FMN and iron-sulfur (Fe-S) centers, to quinones in the respiratory chain. The immediate electron acceptor for the enzyme in this species is believed to be ubiquinone. Couples the redox reaction to proton translocation (for every two electrons transferred, four hydrogen ions are translocated across the cytoplasmic membrane), and thus conserves the redox energy in a proton gradient. In Nitrosomonas eutropha (strain DSM 101675 / C91 / Nm57), this protein is NADH-quinone oxidoreductase subunit I.